The following is a 944-amino-acid chain: LPS-assembly protein LptD (944 aa).

The N-terminal stretch at Met-1–Ala-33 is a signal peptide. The segment at Lys-52–Ser-102 is disordered. The segment covering Pro-64–Ala-82 has biased composition (low complexity).

It belongs to the LptD family. Component of the lipopolysaccharide transport and assembly complex. Interacts with LptE and LptA.

It localises to the cell outer membrane. Together with LptE, is involved in the assembly of lipopolysaccharide (LPS) at the surface of the outer membrane. This is LPS-assembly protein LptD from Pseudomonas entomophila (strain L48).